Here is a 165-residue protein sequence, read N- to C-terminus: Protein E6 (165 aa).

2 zinc fingers span residues 52 to 88 (CNFC…CRVC) and 125 to 161 (CYTC…CRLC).

This sequence belongs to the papillomaviridae E6 protein family. As to quaternary structure, forms homodimers. Interacts with ubiquitin-protein ligase UBE3A/E6-AP; this interaction stimulates UBE3A ubiquitin activity. Interacts with host BAK1.

The protein resides in the host cytoplasm. The protein localises to the host nucleus. Plays a major role in the induction and maintenance of cellular transformation. E6 associates with host UBE3A/E6-AP ubiquitin-protein ligase and modulates its activity. Protects host keratinocytes from apoptosis by mediating the degradation of host BAK1. May also inhibit host immune response. This Homo sapiens (Human) protein is Protein E6.